Consider the following 391-residue polypeptide: Formate-dependent phosphoribosylglycinamide formyltransferase (391 aa).

Residues 20 to 21 and glutamate 80 contribute to the N(1)-(5-phospho-beta-D-ribosyl)glycinamide site; that span reads EL. Residues arginine 112, lysine 153, 158 to 163, 193 to 196, and glutamate 201 contribute to the ATP site; these read SSGKGQ and EGFI. In terms of domain architecture, ATP-grasp spans 117–306; the sequence is RLAAETLGLP…EFALHVRAIL (190 aa). Residues glutamate 265 and glutamate 277 each contribute to the Mg(2+) site. N(1)-(5-phospho-beta-D-ribosyl)glycinamide contacts are provided by residues aspartate 284, lysine 354, and 361–362; that span reads RR.

The protein belongs to the PurK/PurT family. In terms of assembly, homodimer.

The catalysed reaction is N(1)-(5-phospho-beta-D-ribosyl)glycinamide + formate + ATP = N(2)-formyl-N(1)-(5-phospho-beta-D-ribosyl)glycinamide + ADP + phosphate + H(+). It functions in the pathway purine metabolism; IMP biosynthesis via de novo pathway; N(2)-formyl-N(1)-(5-phospho-D-ribosyl)glycinamide from N(1)-(5-phospho-D-ribosyl)glycinamide (formate route): step 1/1. Involved in the de novo purine biosynthesis. Catalyzes the transfer of formate to 5-phospho-ribosyl-glycinamide (GAR), producing 5-phospho-ribosyl-N-formylglycinamide (FGAR). Formate is provided by PurU via hydrolysis of 10-formyl-tetrahydrofolate. The sequence is that of Formate-dependent phosphoribosylglycinamide formyltransferase from Shewanella sp. (strain ANA-3).